Here is a 344-residue protein sequence, read N- to C-terminus: Putative esterase NocK (344 aa).

The tat-type signal signal peptide spans 1-34 (MIGVTRRSGLALAVLVSSAACAGAEPVAPPPAPA). A disordered region spans residues 265–295 (GGADERRREEARPAAAPGGTSTSRETCANPD). A compositionally biased stretch (basic and acidic residues) spans 266–276 (GADERRREEAR).

The protein belongs to the AB hydrolase superfamily. Post-translationally, predicted to be exported by the Tat system. The position of the signal peptide cleavage has not been experimentally proven.

The chain is Putative esterase NocK from Nocardia uniformis subsp. tsuyamanensis.